Consider the following 497-residue polypeptide: Probable cytosol aminopeptidase (497 aa).

Lysine 267 and aspartate 272 together coordinate Mn(2+). Residue lysine 279 is part of the active site. Mn(2+) contacts are provided by aspartate 290, aspartate 349, and glutamate 351. Arginine 353 is a catalytic residue.

Belongs to the peptidase M17 family. It depends on Mn(2+) as a cofactor.

It localises to the cytoplasm. It carries out the reaction Release of an N-terminal amino acid, Xaa-|-Yaa-, in which Xaa is preferably Leu, but may be other amino acids including Pro although not Arg or Lys, and Yaa may be Pro. Amino acid amides and methyl esters are also readily hydrolyzed, but rates on arylamides are exceedingly low.. It catalyses the reaction Release of an N-terminal amino acid, preferentially leucine, but not glutamic or aspartic acids.. In terms of biological role, presumably involved in the processing and regular turnover of intracellular proteins. Catalyzes the removal of unsubstituted N-terminal amino acids from various peptides. The sequence is that of Probable cytosol aminopeptidase from Nitrosomonas europaea (strain ATCC 19718 / CIP 103999 / KCTC 2705 / NBRC 14298).